Here is a 327-residue protein sequence, read N- to C-terminus: Metaxin-1 homolog (327 aa).

The helical transmembrane segment at Ile-281–Tyr-301 threads the bilayer.

Belongs to the metaxin family. As to quaternary structure, associates with the mitochondrial contact site and cristae organizing system (MICOS) complex (also known as MINOS or MitOS complex).

The protein resides in the mitochondrion outer membrane. Functionally, involved in transport of proteins into the mitochondrion. Essential for embryonic development. The chain is Metaxin-1 homolog from Drosophila melanogaster (Fruit fly).